Consider the following 1112-residue polypeptide: Electrogenic sodium bicarbonate cotransporter 4 (1112 aa).

Residues 1 to 13 (MKVEEKAGVKKLE) are compositionally biased toward basic and acidic residues. Disordered stretches follow at residues 1-80 (MKVE…SSLG), 220-255 (KKPIHRSLADIGKSVSTTNRSSARSPSAGPTLHHST), and 439-469 (GRSGASAGGGGSGGGAGGSGAGGGGSGNEAE). At 1–513 (MKVEEKAGVK…DFYDGFHIQS (513 aa)) the chain is on the cytoplasmic side. 2 stretches are compositionally biased toward polar residues: residues 53 to 67 (QRVQWSLQPDKSQQD) and 233 to 244 (SVSTTNRSSARS). Gly residues predominate over residues 444-465 (SAGGGGSGGGAGGSGAGGGGSG). Residues 514-536 (ISAVLFIYLGCITNAITFGGLLG) form a helical membrane-spanning segment. Topologically, residues 537-547 (DATDNYQGVME) are extracellular. The chain crosses the membrane as a helical span at residues 548 to 579 (SFLGTAMAGSLFCLFSGQPLIILSSTGPILIF). The Cytoplasmic segment spans residues 580 to 598 (EKLLFDFSKANGLDYMEFR). Residues 599–620 (LWIGLHSAIQCLILVATDASFI) form a helical membrane-spanning segment. The Extracellular segment spans residues 621–734 (IKYITRFTEE…LGSSCQFVPD (114 aa)). A helical transmembrane segment spans residues 735-753 (LALMSFILFFGTYSMTLTL). The Cytoplasmic segment spans residues 754-772 (KKFKFSRYFPTKVRTLVAD). A helical transmembrane segment spans residues 773-792 (FSIVFSILLFCGIDACFGLQ). Over 793 to 820 (TPKLHVPNVIKPTRPDRGWFVAPFGKNP) the chain is Extracellular. Residues 821 to 839 (WWVYPASILPALLVTILIF) form a helical membrane-spanning segment. The Cytoplasmic portion of the chain corresponds to 840–858 (MDQQITAVIVNRKENKLRK). A helical transmembrane segment spans residues 859-875 (AAGYHLDLFWVGILMAL). Residues 876–880 (CSFMG) are Extracellular-facing. Residues 881–900 (LPWYVAATVISIAHIDSLKM) form a helical membrane-spanning segment. Over 901–920 (ETETSAPGEQPQFLGVREQR) the chain is Cytoplasmic. A helical transmembrane segment spans residues 921–940 (VTGVMVFILTGISVFLAPIL). The Extracellular portion of the chain corresponds to 941–945 (KYIPM). Residues 946-966 (PVLYGVFLYMGVASLNGIQFW) traverse the membrane as a helical segment. Residues 967–992 (DRCKLFLMPAKHQPDHAFLRHVPLRR) are Cytoplasmic-facing. Residues 993–1010 (IHLFTLVQILCLALLWIL) form a helical membrane-spanning segment. The Extracellular segment spans residues 1011-1015 (KSTMA). Residues 1016–1033 (AIIFPVMILGLIIVRRLL) form a helical membrane-spanning segment. Residues 1034–1112 (DLIFSQHDLA…KRSSSWSHSL (79 aa)) lie on the Cytoplasmic side of the membrane. Positions 1055–1074 (KESDRKKRRKEVHENTDKEP) are enriched in basic and acidic residues. Positions 1055–1112 (KESDRKKRRKEVHENTDKEPQFLPPSVVKIPMEGIPSDPQNGIHCVGRKRSSSWSHSL) are disordered.

Belongs to the anion exchanger (TC 2.A.31) family. In terms of tissue distribution, observed in hepatocytes and in the apical region of bile duct intrahepatic cholangiocytes of liver. Also observed in uroepithelium cells lining the outer pelvic wall of the kidney (at protein level). Highly expressed in colon, distal colon, liver, kidney and testis. Moderate expression in duodenum and stomach and weak expression in heart. In kidney, very weakly expressed in the inner medulla, but abundantly expressed in cortex and outer medulla in the medullary thick ascending and cortical thick ascending limbs of the loop of Henle.

It is found in the basolateral cell membrane. The protein resides in the apical cell membrane. It catalyses the reaction 2 hydrogencarbonate(out) + Na(+)(out) = 2 hydrogencarbonate(in) + Na(+)(in). The enzyme catalyses 3 hydrogencarbonate(out) + Na(+)(out) = 3 hydrogencarbonate(in) + Na(+)(in). In terms of biological role, mediates sodium- and bicarbonate-dependent electrogenic sodium bicarbonate cotransport, with a Na(+):HCO3(-) stoichiometry varying from 1:2 to 1:3. This Rattus norvegicus (Rat) protein is Electrogenic sodium bicarbonate cotransporter 4.